A 957-amino-acid chain; its full sequence is Glycine dehydrogenase (decarboxylating) (957 aa).

Lysine 708 carries the N6-(pyridoxal phosphate)lysine modification.

Belongs to the GcvP family. In terms of assembly, the glycine cleavage system is composed of four proteins: P, T, L and H. The cofactor is pyridoxal 5'-phosphate.

The catalysed reaction is N(6)-[(R)-lipoyl]-L-lysyl-[glycine-cleavage complex H protein] + glycine + H(+) = N(6)-[(R)-S(8)-aminomethyldihydrolipoyl]-L-lysyl-[glycine-cleavage complex H protein] + CO2. Functionally, the glycine cleavage system catalyzes the degradation of glycine. The P protein binds the alpha-amino group of glycine through its pyridoxal phosphate cofactor; CO(2) is released and the remaining methylamine moiety is then transferred to the lipoamide cofactor of the H protein. The polypeptide is Glycine dehydrogenase (decarboxylating) (Escherichia fergusonii (strain ATCC 35469 / DSM 13698 / CCUG 18766 / IAM 14443 / JCM 21226 / LMG 7866 / NBRC 102419 / NCTC 12128 / CDC 0568-73)).